We begin with the raw amino-acid sequence, 400 residues long: Argininosuccinate synthase (400 aa).

ATP contacts are provided by residues 10–18 and alanine 38; that span reads AYSGGVDTS. Tyrosine 89 lines the L-citrulline pocket. Glycine 119 lines the ATP pocket. L-aspartate-binding residues include threonine 121, asparagine 125, and aspartate 126. Asparagine 125 provides a ligand contact to L-citrulline. Residues arginine 129, serine 177, serine 186, glutamate 262, and tyrosine 274 each coordinate L-citrulline.

This sequence belongs to the argininosuccinate synthase family. Type 1 subfamily. In terms of assembly, homotetramer.

The protein resides in the cytoplasm. It catalyses the reaction L-citrulline + L-aspartate + ATP = 2-(N(omega)-L-arginino)succinate + AMP + diphosphate + H(+). Its pathway is amino-acid biosynthesis; L-arginine biosynthesis; L-arginine from L-ornithine and carbamoyl phosphate: step 2/3. This chain is Argininosuccinate synthase, found in Prochlorococcus marinus (strain NATL1A).